Consider the following 362-residue polypeptide: Putative membrane-bound acyltransferase YfiQ (362 aa).

10 helical membrane passes run 11–31 (CISCLSVVLLHIISMVLMLQA), 44–64 (FRTLLMFSTPAFIFISEFLLA), 82–102 (VIFVPFLFIAAIDALLMTSAM), 119–139 (VFLGNFIGYFILVIFQFYMLH), 153–173 (WVLSISFVVTAAYLGYFSAAS), 181–201 (GGAFPFFWVPFAGWLFYFCLA), 220–240 (WVVYGAAIASGALVVTVSYVG), 252–267 (IMLYSTSMIFLCFHLF), 283–303 (YSFSIYLLHAYFMIIGYVLLL), and 308–328 (IPAVPAVLLLFAVCTAGPIMT).

It belongs to the acyltransferase 3 family.

The protein resides in the cell membrane. This chain is Putative membrane-bound acyltransferase YfiQ (yfiQ), found in Bacillus subtilis (strain 168).